A 98-amino-acid polypeptide reads, in one-letter code: Large ribosomal subunit protein bL21 (98 aa).

Belongs to the bacterial ribosomal protein bL21 family. Part of the 50S ribosomal subunit. Contacts protein L20.

This protein binds to 23S rRNA in the presence of protein L20. The protein is Large ribosomal subunit protein bL21 of Chloroherpeton thalassium (strain ATCC 35110 / GB-78).